A 470-amino-acid chain; its full sequence is Protein nucleotidyltransferase YdiU (470 aa).

Positions 86, 88, 89, 109, 121, 122, 172, and 179 each coordinate ATP. Asp-244 functions as the Proton acceptor in the catalytic mechanism. Mg(2+)-binding residues include Asn-245 and Asp-254. Asp-254 is a binding site for ATP.

This sequence belongs to the SELO family. The cofactor is Mg(2+). Mn(2+) serves as cofactor.

The catalysed reaction is L-seryl-[protein] + ATP = 3-O-(5'-adenylyl)-L-seryl-[protein] + diphosphate. It carries out the reaction L-threonyl-[protein] + ATP = 3-O-(5'-adenylyl)-L-threonyl-[protein] + diphosphate. It catalyses the reaction L-tyrosyl-[protein] + ATP = O-(5'-adenylyl)-L-tyrosyl-[protein] + diphosphate. The enzyme catalyses L-histidyl-[protein] + UTP = N(tele)-(5'-uridylyl)-L-histidyl-[protein] + diphosphate. The catalysed reaction is L-seryl-[protein] + UTP = O-(5'-uridylyl)-L-seryl-[protein] + diphosphate. It carries out the reaction L-tyrosyl-[protein] + UTP = O-(5'-uridylyl)-L-tyrosyl-[protein] + diphosphate. Its function is as follows. Nucleotidyltransferase involved in the post-translational modification of proteins. It can catalyze the addition of adenosine monophosphate (AMP) or uridine monophosphate (UMP) to a protein, resulting in modifications known as AMPylation and UMPylation. This Roseobacter denitrificans (strain ATCC 33942 / OCh 114) (Erythrobacter sp. (strain OCh 114)) protein is Protein nucleotidyltransferase YdiU.